Consider the following 413-residue polypeptide: Monacolin J acid methylbutanoyltransferase (413 aa).

R73 serves as a coordination point for monacolin J. S76 functions as the Acyl-ester intermediate in the catalytic mechanism. Monacolin J-binding residues include R173, Y188, and Y258. Residue G366 participates in 2-methylbutanoate binding. The monacolin J site is built by E388 and W390.

It belongs to the class-A beta-lactamase family. As to quaternary structure, interacts with LovF.

It carries out the reaction monacolin J carboxylate + (S)-2-methylbutanoyl-[2-methylbutanoate polyketide synthase] = lovastatin carboxylate + holo-[2-methylbutanoate polyketide synthase]. The protein operates within polyketide biosynthesis; lovastatin biosynthesis. Its function is as follows. Monacolin J acid methylbutanoyltransferase; part of the gene cluster that mediates the biosynthesis of lovastatin (also known as mevinolin, mevacor or monacolin K), a hypolipidemic inhibitor of (3S)-hydroxymethylglutaryl-coenzyme A (HMG-CoA) reductase (HMGR). The first step in the biosynthesis of lovastatin is the production of dihydromonacolin L acid by the lovastatin nonaketide synthase lovB and the trans-acting enoyl reductase lovC via condensation of one acetyl-CoA unit and 8 malonyl-CoA units. Dihydromonacolin L acid is released from lovB by the thioesterase lovG. Next, dihydromonacolin L acid is oxidized by the dihydromonacolin L monooxygenase lovA twice to form monacolin J acid. The 2-methylbutyrate moiety of lovastatin is synthesized by the lovastatin diketide synthase lovF via condensation of one acetyl-CoA unit and one malonyl-CoA unit. Finally, the covalent attachment of this moiety to monacolin J acid is catalyzed by the transesterase lovD to yield lovastatin. LovD has broad substrate specificity and can also convert monacolin J to simvastatin using alpha-dimethylbutanoyl-S-methyl-3-mercaptopropionate (DMB-S-MMP) as the thioester acyl donor, and can also catalyze the reverse reaction and function as hydrolase in vitro. LovD has much higher activity with LovF-bound 2-methylbutanoate than with free diketide substrates. This is Monacolin J acid methylbutanoyltransferase from Aspergillus terreus (strain NIH 2624 / FGSC A1156).